A 375-amino-acid polypeptide reads, in one-letter code: Alcohol dehydrogenase 1B (375 aa).

At S1 the chain carries N-acetylserine. C46, H67, C97, C100, C103, C111, and C174 together coordinate Zn(2+). Residues 199–204 (GLGGVG), D223, K228, 293–295 (VGV), and R370 each bind NAD(+).

Belongs to the zinc-containing alcohol dehydrogenase family. Class-I subfamily. In terms of assembly, multimeric (with different ratios of monomers). Zn(2+) is required as a cofactor.

The protein localises to the cytoplasm. It catalyses the reaction a primary alcohol + NAD(+) = an aldehyde + NADH + H(+). The enzyme catalyses a secondary alcohol + NAD(+) = a ketone + NADH + H(+). This chain is Alcohol dehydrogenase 1B, found in Saara hardwickii (Indian spiny-tailed lizard).